A 186-amino-acid polypeptide reads, in one-letter code: Large ribosomal subunit protein bL17 (186 aa).

The disordered stretch occupies residues 123–186; the sequence is SEADRARRVK…ADEAEGSSED (64 aa). Over residues 139 to 177 the composition is skewed to low complexity; sequence EAAAAAPQAAVEPEAVEAAPAPDAPEAAPEAEAAAPQPA.

It belongs to the bacterial ribosomal protein bL17 family. In terms of assembly, part of the 50S ribosomal subunit. Contacts protein L32.

The chain is Large ribosomal subunit protein bL17 from Mycobacterium avium (strain 104).